Reading from the N-terminus, the 249-residue chain is Probable phosphatase Shal_1519 (249 aa).

Residues H8, H10, H16, H41, E74, H102, H132, D193, and H195 each contribute to the Zn(2+) site.

Belongs to the PHP family. Zn(2+) serves as cofactor.

In Shewanella halifaxensis (strain HAW-EB4), this protein is Probable phosphatase Shal_1519.